Consider the following 494-residue polypeptide: ATP synthase subunit alpha 1 (494 aa).

The protein belongs to the ATPase alpha/beta chains family. In terms of assembly, F-type ATPases have 2 components, CF(1) - the catalytic core - and CF(0) - the membrane proton channel. CF(1) has five subunits: alpha(3), beta(3), gamma(1), delta(1), epsilon(1). CF(0) has three main subunits: a(1), b(2) and c(9-12). The alpha and beta chains form an alternating ring which encloses part of the gamma chain. CF(1) is attached to CF(0) by a central stalk formed by the gamma and epsilon chains, while a peripheral stalk is formed by the delta and b chains.

It localises to the cell inner membrane. The catalysed reaction is ATP + H2O + 4 H(+)(in) = ADP + phosphate + 5 H(+)(out). Functionally, produces ATP from ADP in the presence of a proton gradient across the membrane. The alpha chain is a regulatory subunit. The sequence is that of ATP synthase subunit alpha 1 from Hahella chejuensis (strain KCTC 2396).